Here is a 1104-residue protein sequence, read N- to C-terminus: Translation initiation factor IF-2 (1104 aa).

2 disordered regions span residues 51-444 (SLLG…LAAQ) and 461-497 (LARPAKPKSQQRTAPKPVAAMRKRKKETARQRQRRRA). Low complexity-rich tracts occupy residues 60-119 (AKPA…KPQA) and 127-164 (ATPKPVISKPAPALVKAAAAPARPTAAKPVPRPAAAKP). Residues 189–202 (APTPRPTPARPTPR) show a composition bias toward pro residues. Composition is skewed to low complexity over residues 203–215 (PAGAGSPARPTPG), 227–246 (GAPSRPGAPTRAGAPAKPGA), 311–336 (STTGSGRPGAPTRPGAPGRPGMPAGM), and 366–396 (PTKAGAGAGTATPPVARPNSPSAPRRPSFRP). Basic and acidic residues predominate over residues 406–420 (GRPDWDDSARLDALR). Positions 481–495 (MRKRKKETARQRQRR) are enriched in basic residues. Residues 596-768 (RRPPVVTVMG…LLLVTEVEDL (173 aa)) enclose the tr-type G domain. The interval 605–612 (GHVDHGKT) is G1. Residue 605–612 (GHVDHGKT) participates in GTP binding. The G2 stretch occupies residues 630 to 634 (GITQH). A G3 region spans residues 655 to 658 (DTPG). GTP is bound by residues 655–659 (DTPGH) and 709–712 (NKID). The tract at residues 709–712 (NKID) is G4. The interval 745–747 (SAI) is G5.

Belongs to the TRAFAC class translation factor GTPase superfamily. Classic translation factor GTPase family. IF-2 subfamily.

The protein localises to the cytoplasm. Its function is as follows. One of the essential components for the initiation of protein synthesis. Protects formylmethionyl-tRNA from spontaneous hydrolysis and promotes its binding to the 30S ribosomal subunits. Also involved in the hydrolysis of GTP during the formation of the 70S ribosomal complex. In Synechococcus sp. (strain CC9605), this protein is Translation initiation factor IF-2.